A 148-amino-acid polypeptide reads, in one-letter code: uncharacterized protein (148 aa).

Residues 7–29 (MLILMSLVKIVLTCLPTGVIEWL) form a helical membrane-spanning segment.

It localises to the membrane. This is an uncharacterized protein from Bacillus subtilis (strain 168).